The chain runs to 221 residues: RNA pyrophosphohydrolase (221 aa).

Residues 6 to 149 (GFRPNVGIVL…KRSVYALALT (144 aa)) enclose the Nudix hydrolase domain. The short motif at 38–59 (GGIDRGETPEQAMFRELHEEVG) is the Nudix box element.

The protein belongs to the Nudix hydrolase family. RppH subfamily. A divalent metal cation serves as cofactor.

Accelerates the degradation of transcripts by removing pyrophosphate from the 5'-end of triphosphorylated RNA, leading to a more labile monophosphorylated state that can stimulate subsequent ribonuclease cleavage. The chain is RNA pyrophosphohydrolase from Verminephrobacter eiseniae (strain EF01-2).